The sequence spans 540 residues: DM7 family protein GD24576 (540 aa).

The disordered stretch occupies residues 416 to 443 (ATDTRGRDEIRTSCDQSQEKDEGSAEAD). A compositionally biased stretch (basic and acidic residues) spans 417-443 (TDTRGRDEIRTSCDQSQEKDEGSAEAD).

The protein belongs to the DM7 family.

The protein is DM7 family protein GD24576 of Drosophila simulans (Fruit fly).